We begin with the raw amino-acid sequence, 89 residues long: Elongation factor 1-beta (89 aa).

This sequence belongs to the EF-1-beta/EF-1-delta family.

Functionally, promotes the exchange of GDP for GTP in EF-1-alpha/GDP, thus allowing the regeneration of EF-1-alpha/GTP that could then be used to form the ternary complex EF-1-alpha/GTP/AAtRNA. The sequence is that of Elongation factor 1-beta from Methanosarcina acetivorans (strain ATCC 35395 / DSM 2834 / JCM 12185 / C2A).